The primary structure comprises 487 residues: Cytochrome c-552 (487 aa).

Residues 1–27 (MSKKWTRNTAAMAAILSALCLSTNALA) form the signal peptide. Histidine 104 contributes to the heme c binding site. Residues cysteine 132, cysteine 135, and lysine 136 each coordinate heme. Residues cysteine 170, cysteine 173, histidine 174, cysteine 219, cysteine 222, and histidine 223 each coordinate heme c. Positions 225, 226, 271, and 273 each coordinate Ca(2+). Tyrosine 226 lines the substrate pocket. Histidine 274 lines the substrate pocket. The heme c site is built by histidine 285, cysteine 292, cysteine 295, histidine 296, histidine 311, cysteine 324, cysteine 327, histidine 328, and histidine 403.

Belongs to the cytochrome c-552 family. Ca(2+) is required as a cofactor. It depends on heme c as a cofactor.

The protein localises to the periplasm. The catalysed reaction is 6 Fe(III)-[cytochrome c] + NH4(+) + 2 H2O = 6 Fe(II)-[cytochrome c] + nitrite + 8 H(+). The protein operates within nitrogen metabolism; nitrate reduction (assimilation). In terms of biological role, catalyzes the reduction of nitrite to ammonia, consuming six electrons in the process. This chain is Cytochrome c-552, found in Photobacterium profundum (strain SS9).